The chain runs to 200 residues: Protein Nef (200 aa).

A lipid anchor (N-myristoyl glycine; by host) is attached at Gly-2. Ser-6 carries the post-translational modification Phosphoserine; by host. The acidic; interacts with host PACS1 and PACS2; stabilizes the interaction of NEF/MHC-I with host AP1M1; necessary for MHC-I internalization stretch occupies residues 58 to 60 (EEE). The interval 64–73 (PVRPQVPLRP) is SH3-binding; interaction with Src family tyrosine kinases. Residues 67-70 (PQVP) carry the PxxP; stabilizes the interaction of NEF/MHC-I with host AP1M1; necessary for MHC-I internalization motif. Residues 103–119 (EILDLWVYHTQGYFPDW) form a mediates dimerization, Nef-PTE1 interaction region. A binding to ATP6V1H region spans residues 143–175 (VDPEEVEKANEGENNCLLHPMSLHGMEDDDKEV). The Dileucine internalization motif; necessary for CD4 internalization signature appears at 159-160 (LL). The Diacidic; necessary for CD4 internalization signature appears at 169–170 (ED).

It belongs to the lentivirus primate group Nef protein family. Monomer; cytosolic form. Homodimer; membrane bound form. Interacts with Nef associated p21-activated kinase (PAK2); this interaction activates PAK2. Associates with the Nef-MHC-I-AP1 complex; this complex is required for MHC-I internalization. Interacts (via C-terminus) with host PI3-kinase. Interacts with host PACS1; this interaction seems to be weak. Interacts with host PACS2. Interacts with host LCK and MAPK3; these interactions inhibit the kinase activity of the latter. Interacts with host ATP6V1H; this interaction may play a role in CD4 endocytosis. Associates with the CD4-Nef-AP2 complex; this complex is required for CD4 internalization. Interacts with host AP2 subunit alpha and AP2 subunit sigma2. Interacts with TCR-zeta chain; this interaction up-regulates the Fas ligand (FasL) surface expression. Interacts with host HCK, LYN, and SRC; these interactions activate the Src family kinases. Interacts with MAP3K5; this interaction inhibits the Fas and TNFR-mediated death signals. Interacts with beta-COP and PTE1. Interacts with human RACK1; this increases Nef phosphorylation by PKC. Interacts with TP53; this interaction decreases the half-life of TP53, protecting the infected cell against p53-mediated apoptosis. Post-translationally, the virion-associated Nef proteins are cleaved by the viral protease to release the soluble C-terminal core protein. Nef is probably cleaved concomitantly with viral structural proteins on maturation of virus particles. Myristoylated. In terms of processing, phosphorylated on serine residues, probably by host PKCdelta and theta.

The protein localises to the host cell membrane. Its subcellular location is the virion. The protein resides in the secreted. It localises to the host Golgi apparatus membrane. Factor of infectivity and pathogenicity, required for optimal virus replication. Alters numerous pathways of T-lymphocyte function and down-regulates immunity surface molecules in order to evade host defense and increase viral infectivity. Alters the functionality of other immunity cells, like dendritic cells, monocytes/macrophages and NK cells. Functionally, in infected CD4(+) T-lymphocytes, down-regulates the surface MHC-I, mature MHC-II, CD4, CD28, CCR5 and CXCR4 molecules. Mediates internalization and degradation of host CD4 through the interaction of with the cytoplasmic tail of CD4, the recruitment of AP-2 (clathrin adapter protein complex 2), internalization through clathrin coated pits, and subsequent transport to endosomes and lysosomes for degradation. Diverts host MHC-I molecules to the trans-Golgi network-associated endosomal compartments by an endocytic pathway to finally target them for degradation. MHC-I down-regulation may involve AP-1 (clathrin adapter protein complex 1) or possibly Src family kinase-ZAP70/Syk-PI3K cascade recruited by PACS2. In consequence infected cells are masked for immune recognition by cytotoxic T-lymphocytes. Decreasing the number of immune receptors also prevents reinfection by more HIV particles (superinfection). Down-regulates host SERINC3 and SERINC5 thereby excluding these proteins from the viral particles. Virion infectivity is drastically higher when SERINC3 or SERINC5 are excluded from the viral envelope, because these host antiviral proteins impair the membrane fusion event necessary for subsequent virion penetration. Its function is as follows. Bypasses host T-cell signaling by inducing a transcriptional program nearly identical to that of anti-CD3 cell activation. Interaction with TCR-zeta chain up-regulates the Fas ligand (FasL). Increasing surface FasL molecules and decreasing surface MHC-I molecules on infected CD4(+) cells send attacking cytotoxic CD8+ T-lymphocytes into apoptosis. In terms of biological role, plays a role in optimizing the host cell environment for viral replication without causing cell death by apoptosis. Protects the infected cells from apoptosis in order to keep them alive until the next virus generation is ready to strike. Inhibits the Fas and TNFR-mediated death signals by blocking MAP3K5/ASK1. Decreases the half-life of TP53, protecting the infected cell against p53-mediated apoptosis. Inhibits the apoptotic signals regulated by the Bcl-2 family proteins through the formation of a Nef/PI3-kinase/PAK2 complex that leads to activation of PAK2 and induces phosphorylation of host BAD. Extracellular Nef protein targets CD4(+) T-lymphocytes for apoptosis by interacting with CXCR4 surface receptors. The polypeptide is Protein Nef (Homo sapiens (Human)).